A 161-amino-acid polypeptide reads, in one-letter code: Glycine-rich RNA-binding protein blt801 (161 aa).

The RRM domain occupies 6-84; that stretch reads YRCFVGGLRW…RNITVNEAQS (79 aa). The interval 72-161 is disordered; that stretch reads LDGRNITVNE…GGSGGGNWRE (90 aa). S87 bears the Phosphoserine; by PKA mark. Over residues 89–161 the composition is skewed to gly residues; sequence GGGGFGGGGG…GGSGGGNWRE (73 aa).

Its function is as follows. Binds single-stranded DNA and homoribopolymers of guanine, uracil and adenine, but not cytosine. Also binds RNA, with a preference for RNA containing a high proportion of adenine within an open loop structure. Possibly has a role in RNA transcription or processing during stress. The chain is Glycine-rich RNA-binding protein blt801 from Hordeum vulgare (Barley).